Reading from the N-terminus, the 372-residue chain is Anhydro-N-acetylmuramic acid kinase (372 aa).

12–19 (GTSMDALD) contacts ATP.

It belongs to the anhydro-N-acetylmuramic acid kinase family.

The enzyme catalyses 1,6-anhydro-N-acetyl-beta-muramate + ATP + H2O = N-acetyl-D-muramate 6-phosphate + ADP + H(+). It participates in amino-sugar metabolism; 1,6-anhydro-N-acetylmuramate degradation. It functions in the pathway cell wall biogenesis; peptidoglycan recycling. Functionally, catalyzes the specific phosphorylation of 1,6-anhydro-N-acetylmuramic acid (anhMurNAc) with the simultaneous cleavage of the 1,6-anhydro ring, generating MurNAc-6-P. Is required for the utilization of anhMurNAc either imported from the medium or derived from its own cell wall murein, and thus plays a role in cell wall recycling. The polypeptide is Anhydro-N-acetylmuramic acid kinase (Coxiella burnetii (strain CbuK_Q154) (Coxiella burnetii (strain Q154))).